The primary structure comprises 252 residues: 3-dehydroquinate dehydratase (252 aa).

3-dehydroquinate-binding positions include serine 21, 46–48, and arginine 82; that span reads EWR. Histidine 143 (proton donor/acceptor) is an active-site residue. Lysine 170 (schiff-base intermediate with substrate) is an active-site residue. Arginine 213, serine 232, and glutamine 236 together coordinate 3-dehydroquinate.

The protein belongs to the type-I 3-dehydroquinase family. In terms of assembly, homodimer.

It carries out the reaction 3-dehydroquinate = 3-dehydroshikimate + H2O. Its pathway is metabolic intermediate biosynthesis; chorismate biosynthesis; chorismate from D-erythrose 4-phosphate and phosphoenolpyruvate: step 3/7. Involved in the third step of the chorismate pathway, which leads to the biosynthesis of aromatic amino acids. Catalyzes the cis-dehydration of 3-dehydroquinate (DHQ) and introduces the first double bond of the aromatic ring to yield 3-dehydroshikimate. The sequence is that of 3-dehydroquinate dehydratase from Escherichia coli (strain SE11).